A 574-amino-acid polypeptide reads, in one-letter code: Membrane protein insertase YidC (574 aa).

Transmembrane regions (helical) follow at residues 6 to 26 (VFLI…WGKD), 356 to 376 (FSIM…LHSF), 380 to 400 (WGWA…PLSA), 447 to 467 (GGCL…WVLV), 489 to 509 (PYFI…KLTP), and 525 to 545 (PLVF…YWVV).

Belongs to the OXA1/ALB3/YidC family. Type 1 subfamily. Interacts with the Sec translocase complex via SecD. Specifically interacts with transmembrane segments of nascent integral membrane proteins during membrane integration.

Its subcellular location is the cell inner membrane. Its function is as follows. Required for the insertion and/or proper folding and/or complex formation of integral membrane proteins into the membrane. Involved in integration of membrane proteins that insert both dependently and independently of the Sec translocase complex, as well as at least some lipoproteins. Aids folding of multispanning membrane proteins. This is Membrane protein insertase YidC from Xanthomonas axonopodis pv. citri (strain 306).